The following is a 226-amino-acid chain: Translation initiation factor 6 (226 aa).

Belongs to the eIF-6 family.

Functionally, binds to the 50S ribosomal subunit and prevents its association with the 30S ribosomal subunit to form the 70S initiation complex. The protein is Translation initiation factor 6 of Haloquadratum walsbyi (strain DSM 16790 / HBSQ001).